The following is a 396-amino-acid chain: Protein-export membrane protein SecD (396 aa).

The next 6 helical transmembrane spans lie at 12 to 32 (ILIL…KGLD), 243 to 263 (LKGT…IVSI), 272 to 292 (IPIL…ASLI), 298 to 318 (LPSI…QIVI), 338 to 358 (FFII…LFVL), and 360 to 380 (VGML…GIFI).

This sequence belongs to the SecD/SecF family. SecD subfamily. Part of the protein translocation apparatus. Forms a complex with SecF.

The protein localises to the cell membrane. Its function is as follows. Involved in protein export. This is Protein-export membrane protein SecD from Methanocaldococcus jannaschii (strain ATCC 43067 / DSM 2661 / JAL-1 / JCM 10045 / NBRC 100440) (Methanococcus jannaschii).